The sequence spans 134 residues: MGFKRFVEIGRVALVNYGEDYGKLVVIVDVVDQNRALVDAPDMERIQMNLKRLSLTDIVIDINRVPKKKVLIEAMEKADVKNKWEKSSWGRKLIVQKRRAALNDFDRFKIMLAKIKRAGIVRQELAKLKREIAA.

Belongs to the eukaryotic ribosomal protein eL14 family.

In Arabidopsis thaliana (Mouse-ear cress), this protein is Large ribosomal subunit protein eL14z (RPL14A).